We begin with the raw amino-acid sequence, 336 residues long: tRNA N6-adenosine threonylcarbamoyltransferase (336 aa).

Residues His111, His115, and Tyr132 each contribute to the Fe cation site. Residues 132–136 (YLSGG), Asp164, Asp185, and Ser264 contribute to the substrate site. A Fe cation-binding site is contributed by Asp292.

Belongs to the KAE1 / TsaD family. Requires Fe(2+) as cofactor.

The protein resides in the cytoplasm. The catalysed reaction is L-threonylcarbamoyladenylate + adenosine(37) in tRNA = N(6)-L-threonylcarbamoyladenosine(37) in tRNA + AMP + H(+). Functionally, required for the formation of a threonylcarbamoyl group on adenosine at position 37 (t(6)A37) in tRNAs that read codons beginning with adenine. Is probably involved in the transfer of the threonylcarbamoyl moiety of threonylcarbamoyl-AMP (TC-AMP) to the N6 group of A37. The chain is tRNA N6-adenosine threonylcarbamoyltransferase from Sulfurisphaera tokodaii (strain DSM 16993 / JCM 10545 / NBRC 100140 / 7) (Sulfolobus tokodaii).